The following is a 634-amino-acid chain: Mitochondrial Rho GTPase 1 (634 aa).

At 1–604 (MLCCMRICVC…PRSEEDVEGK (604 aa)) the chain is on the cytoplasmic side. The Miro 1 domain occupies 2 to 171 (LCCMRICVCG…FFLCQKAVTH (170 aa)). GTP-binding positions include 11–18 (GDEGTGKS), 60–64 (DTSAV), and 116–119 (NKSD). 2 consecutive EF-hand domains span residues 187-222 (AAVA…CFEK) and 307-342 (EGYR…TPGL). D200, D202, D204, Y206, E211, D320, D322, D324, and E331 together coordinate Ca(2+). The segment at 399 to 419 (NPSTTAALKVTRPRKRRKRPG) is disordered. Residues 409–419 (TRPRKRRKRPG) are compositionally biased toward basic residues. A Miro 2 domain is found at 423–589 (RNVVLGHIVG…FVHIAEAAME (167 aa)). GTP is bound by residues 432–439 (GAPGSGKS), 468–472 (ELPGG), and 538–541 (LKAD). The helical; Anchor for type IV membrane protein transmembrane segment at 605-625 (WMSWGIALGAVVCAGAAAVMI) threads the bilayer. Topologically, residues 626 to 634 (WRRVSGSGV) are mitochondrial intermembrane.

Belongs to the mitochondrial Rho GTPase family.

It is found in the mitochondrion outer membrane. Mitochondrial GTPase involved in mitochondrial trafficking. Probably involved in control of anterograde transport of mitochondria and their subcellular distribution. The protein is Mitochondrial Rho GTPase 1 (gem1) of Emericella nidulans (strain FGSC A4 / ATCC 38163 / CBS 112.46 / NRRL 194 / M139) (Aspergillus nidulans).